The primary structure comprises 816 residues: MGSNLPAQPNLRVTIIAADGLYKRDVFRFPDPFAVATVGGEQTHTTSVIKKTLNPYWNEMFDLRVNEDSILAIQIFDQKKFKKKDQGFLGVINVRIGDVIDLQMGGDEMLTRDLKKSNDNLVVHGKLIINLSTNLSTPNTNQANGLHRSHMQPSTSSGLVPQVSASTPQPSPGPSQADPTASNPSLHPQRVPSTTRPSSTIVPANGPPAPPNGQQGSRTNLSSFEDSQGRLPAGWERREDNLGRTYYVDHNTRTTTWTRPSNNYNEQTSRTQREASMQLERRAHQSRMLPEDRTGASSPNLQENQQQAQTPPAGGSASAVSMMATGATTAGTGELPPGWEQRTTPEGRPYFVDHNTRTTTWVDPRRQQYIRMYGQNANGTNTTIQQQPVSQLGPLPSGWEMRLTNTARVYFVDHNTKTTTWDDPRLPSSLDQGVPQYKRDFRRKLIYFRSQPALRIMSGQCHVKVRRNNIFEDSYAEIMRQSASDLKKRLMIKFDGEDGLDYGGLSRREFFFLLSHEMFNPFYCLFEYSAHDNYTLQINPHSGVNPEHLNYFKFIGRVVGLAIFHRRFLDSFFIGAFYKMMLRKKVSLQDMEGVDEDLHRNLTWTLDNDIEGIIELTFAVDDEKFGERRTIDLKPGGRDIPVTNENKGEYVELVTEWKIVKRVEEQFNAFMSGFNELIPADLVNVFDERELELLIGGIADIDVDDWKKHTDYRGYQESDEVIQNFWKIVRTWDAEQKSRLLQFTTGTSRIPVNGFKDLQGSDGPRRFTIEKSGDPGALPKSHTCFNRLDLPPYKTNDVLEHKLSIAVEETLGFGQE.

Residues 1-112 (MGSNLPAQPN…QMGGDEMLTR (112 aa)) enclose the C2 domain. 2 disordered regions span residues 134-238 (NLST…WERR) and 253-353 (RTTT…YFVD). Polar residues-rich tracts occupy residues 151-168 (MQPS…ASTP), 177-202 (ADPT…STIV), 217-226 (SRTNLSSFED), and 253-270 (RTTT…QTSR). The WW 1 domain occupies 229–262 (GRLPAGWERREDNLGRTYYVDHNTRTTTWTRPSN). Over residues 279–294 (LERRAHQSRMLPEDRT) the composition is skewed to basic and acidic residues. Residues 295-309 (GASSPNLQENQQQAQ) are compositionally biased toward polar residues. Over residues 310–333 (TPPAGGSASAVSMMATGATTAGTG) the composition is skewed to low complexity. WW domains lie at 333–366 (GELP…DPRR) and 393–426 (GPLP…DPRL). The HECT domain maps to 482 to 816 (SASDLKKRLM…VEETLGFGQE (335 aa)). Cys784 serves as the catalytic Glycyl thioester intermediate.

Belongs to the RSP5/NEDD4 family. As to quaternary structure, interacts with creD.

Its subcellular location is the cytoplasm. The enzyme catalyses S-ubiquitinyl-[E2 ubiquitin-conjugating enzyme]-L-cysteine + [acceptor protein]-L-lysine = [E2 ubiquitin-conjugating enzyme]-L-cysteine + N(6)-ubiquitinyl-[acceptor protein]-L-lysine.. It functions in the pathway protein modification; protein ubiquitination. Its function is as follows. E3 ubiquitin-protein ligase which accepts ubiquitin from an E2 ubiquitin-conjugating enzyme in the form of a thioester and then directly transfers the ubiquitin to targeted substrates. Probably involved in the regulatory network controlling carbon source utilization. This is Probable E3 ubiquitin-protein ligase hulA (hulA) from Aspergillus oryzae (strain ATCC 42149 / RIB 40) (Yellow koji mold).